Reading from the N-terminus, the 548-residue chain is Probable thiamine biosynthetic bifunctional enzyme, chloroplastic (548 aa).

Polar residues predominate over residues 1–10 (MAAAPQQSVH). A disordered region spans residues 1-40 (MAAAPQQSVHPSLPSSTSTLRLLISSSPRRPPPPPPRARR). A chloroplast-targeting transit peptide spans 1–47 (MAAAPQQSVHPSLPSSTSTLRLLISSSPRRPPPPPPRARRYNRLAAS). Over residues 11 to 28 (PSLPSSTSTLRLLISSSP) the composition is skewed to low complexity. 4-amino-2-methyl-5-(diphosphooxymethyl)pyrimidine is bound by residues 372 to 376 (QLREK) and Asn-404. Mg(2+)-binding residues include Asp-405 and Asp-424. A 4-amino-2-methyl-5-(diphosphooxymethyl)pyrimidine-binding site is contributed by Ser-443. 469-471 (TST) serves as a coordination point for 2-[(2R,5Z)-2-carboxy-4-methylthiazol-5(2H)-ylidene]ethyl phosphate. Lys-472 serves as a coordination point for 4-amino-2-methyl-5-(diphosphooxymethyl)pyrimidine. Residues Gly-499 and 522–523 (VS) contribute to the 2-[(2R,5Z)-2-carboxy-4-methylthiazol-5(2H)-ylidene]ethyl phosphate site.

This sequence belongs to the thiamine-phosphate synthase family. Requires Mg(2+) as cofactor.

The protein resides in the plastid. It localises to the chloroplast. It catalyses the reaction 2-[(2R,5Z)-2-carboxy-4-methylthiazol-5(2H)-ylidene]ethyl phosphate + 4-amino-2-methyl-5-(diphosphooxymethyl)pyrimidine + 2 H(+) = thiamine phosphate + CO2 + diphosphate. The catalysed reaction is 2-(2-carboxy-4-methylthiazol-5-yl)ethyl phosphate + 4-amino-2-methyl-5-(diphosphooxymethyl)pyrimidine + 2 H(+) = thiamine phosphate + CO2 + diphosphate. It carries out the reaction 4-methyl-5-(2-phosphooxyethyl)-thiazole + 4-amino-2-methyl-5-(diphosphooxymethyl)pyrimidine + H(+) = thiamine phosphate + diphosphate. The enzyme catalyses 4-amino-5-hydroxymethyl-2-methylpyrimidine + ATP = 4-amino-2-methyl-5-(phosphooxymethyl)pyrimidine + ADP + H(+). Its pathway is cofactor biosynthesis; thiamine diphosphate biosynthesis; thiamine phosphate from 4-amino-2-methyl-5-diphosphomethylpyrimidine and 4-methyl-5-(2-phosphoethyl)-thiazole: step 1/1. It participates in cofactor biosynthesis; thiamine diphosphate biosynthesis; 4-amino-2-methyl-5-diphosphomethylpyrimidine from 5-amino-1-(5-phospho-D-ribosyl)imidazole: step 2/3. In terms of biological role, essential for thiamine biosynthesis. Bifunctional enzyme that catalyzes the phosphorylation of hydroxymethylpyrimidine phosphate (HMP-P) to HMP-PP and condenses 4-methyl-5-(beta-hydroxyethyl)thiazole monophosphate (THZ-P) and 2-methyl-4-amino-5-hydroxymethyl pyrimidine pyrophosphate (HMP-PP) to form thiamine monophosphate (TMP). This is Probable thiamine biosynthetic bifunctional enzyme, chloroplastic from Oryza sativa subsp. japonica (Rice).